Here is a 452-residue protein sequence, read N- to C-terminus: Probable cytosolic iron-sulfur protein assembly protein 1 (452 aa).

Pro residues predominate over residues 1-12 (MPPPTTPTPNPS). The disordered stretch occupies residues 1-24 (MPPPTTPTPNPSIPQKATLTPLPP). 6 WD repeats span residues 70–121 (GHAR…DAAA), 161–200 (GHEN…QGGD), 213–267 (EHDG…EWVC), 273–319 (GHGG…FGGV), 340–379 (VHTR…EDVA), and 411–452 (YEVN…VRIS).

It belongs to the WD repeat CIA1 family.

In terms of biological role, essential component of the cytosolic iron-sulfur (Fe/S) protein assembly machinery. Required for the maturation of extramitochondrial Fe/S proteins. The chain is Probable cytosolic iron-sulfur protein assembly protein 1 from Chaetomium globosum (strain ATCC 6205 / CBS 148.51 / DSM 1962 / NBRC 6347 / NRRL 1970) (Soil fungus).